The primary structure comprises 194 residues: Imidazoleglycerol-phosphate dehydratase (194 aa).

The protein belongs to the imidazoleglycerol-phosphate dehydratase family.

The protein localises to the cytoplasm. The catalysed reaction is D-erythro-1-(imidazol-4-yl)glycerol 3-phosphate = 3-(imidazol-4-yl)-2-oxopropyl phosphate + H2O. It participates in amino-acid biosynthesis; L-histidine biosynthesis; L-histidine from 5-phospho-alpha-D-ribose 1-diphosphate: step 6/9. The protein is Imidazoleglycerol-phosphate dehydratase of Lactiplantibacillus plantarum (strain ATCC BAA-793 / NCIMB 8826 / WCFS1) (Lactobacillus plantarum).